The following is a 30-amino-acid chain: Ampulexin 3 (30 aa).

A signal peptide spans 1–17 (MKAIMVLFYVMTLTIIG).

Monomer. As to expression, expressed in venom sac and, to a lesser extent, in venom gland. Not expressed in brain.

It is found in the secreted. This is Ampulexin 3 from Ampulex compressa (Emerald cockroach wasp).